Here is a 339-residue protein sequence, read N- to C-terminus: Dihydroorotate dehydrogenase (quinone) (339 aa).

Residues 62 to 66 (AGLDK) and Thr-86 contribute to the FMN site. Lys-66 contacts substrate. Residue 111 to 115 (NRMGF) coordinates substrate. Residues Asn-139 and Asn-172 each coordinate FMN. Asn-172 contacts substrate. Ser-175 functions as the Nucleophile in the catalytic mechanism. Asn-177 is a binding site for substrate. Lys-217 and Thr-245 together coordinate FMN. 246–247 (NT) lines the substrate pocket. Residues Gly-268, Gly-297, and 318–319 (YS) each bind FMN.

This sequence belongs to the dihydroorotate dehydrogenase family. Type 2 subfamily. As to quaternary structure, monomer. FMN is required as a cofactor.

The protein localises to the cell membrane. The catalysed reaction is (S)-dihydroorotate + a quinone = orotate + a quinol. It participates in pyrimidine metabolism; UMP biosynthesis via de novo pathway; orotate from (S)-dihydroorotate (quinone route): step 1/1. In terms of biological role, catalyzes the conversion of dihydroorotate to orotate with quinone as electron acceptor. The sequence is that of Dihydroorotate dehydrogenase (quinone) from Shewanella frigidimarina (strain NCIMB 400).